Here is a 339-residue protein sequence, read N- to C-terminus: Methionine import ATP-binding protein MetN 2 (339 aa).

In terms of domain architecture, ABC transporter spans 2-241 (ISFNNVSKVY…PKTKTTQNFV (240 aa)). An ATP-binding site is contributed by 38 to 45 (GFSGAGKS).

This sequence belongs to the ABC transporter superfamily. Methionine importer (TC 3.A.1.24) family. In terms of assembly, the complex is composed of two ATP-binding proteins (MetN), two transmembrane proteins (MetI) and a solute-binding protein (MetQ).

The protein localises to the cell membrane. The enzyme catalyses L-methionine(out) + ATP + H2O = L-methionine(in) + ADP + phosphate + H(+). It carries out the reaction D-methionine(out) + ATP + H2O = D-methionine(in) + ADP + phosphate + H(+). In terms of biological role, part of the ABC transporter complex MetNIQ involved in methionine import. Responsible for energy coupling to the transport system. In Bacillus cereus (strain ATCC 10987 / NRS 248), this protein is Methionine import ATP-binding protein MetN 2.